A 608-amino-acid polypeptide reads, in one-letter code: Histone-arginine methyltransferase CARM1 (608 aa).

Positions 28–139 (ATVSVFPGAR…GHTLERSVFS (112 aa)) are interaction with C9orf72. The 308-residue stretch at 147–454 (AVQYFQFYGY…KRQSYDISIV (308 aa)) folds into the SAM-dependent MTase PRMT-type domain. The S-adenosyl-L-methionine site is built by Gln-160, Arg-169, Gly-193, and Glu-215. Ser-217 carries the phosphoserine modification. Lys-228 participates in a covalent cross-link: Glycyl lysine isopeptide (Lys-Gly) (interchain with G-Cter in ubiquitin). Residues Glu-244 and Ser-272 each coordinate S-adenosyl-L-methionine. The segment at 347 to 380 (RILMAKSVKYTVNFLEAKEGDLHRIEIPFKFHML) is required for nuclear translocation. The tract at residues 500–608 (TGSTYNLSSG…IPTNTMHYGS (109 aa)) is transactivation domain. Arg-551 bears the Dimethylated arginine mark.

This sequence belongs to the class I-like SAM-binding methyltransferase superfamily. Protein arginine N-methyltransferase family. As to quaternary structure, homodimer. Interacts with NR1H4. Interacts with SNRPC. Interacts with the C-terminus of NCOA2/GRIP1, NCO3/ACTR and NCOA1/SRC1. Part of a complex consisting of CARM1, EP300/P300 and NCOA2/GRIP1. Interacts with FLII, TP53, myogenic factor MEF2, EP300/P300, TRIM24, CREBBP and CTNNB1. Interacts with RELA. Identified in a complex containing CARM1, TRIM24 and NCOA2/GRIP1. Interacts with NCOA3/SRC3. Interacts with SKP2. Interacts (via PH domain-like fold) with C9orf72. Interacts with PARP1; promoting PARP1 recruimtent to replication forks. In terms of processing, phosphorylation at Ser-217 is strongly increased during mitosis, and decreases rapidly to a very low, basal level after entry into the G1 phase of the cell cycle. Phosphorylation at Ser-217 interferes with S-adenosyl-L-methionine binding and strongly reduces methyltransferase activity. Phosphorylation at Ser-217 may promote cytosolic location. Auto-methylated on Arg-551. Methylation enhances transcription coactivator activity. Methylation is required for its role in the regulation of pre-mRNA alternative splicing. Post-translationally, ubiquitinated by E3 ubiquitin-protein ligase complex containing FBXO9 at Lys-228; leading to proteasomal degradation. Ubiquitously expressed. Within the brain, present in proliferating cells from lateral ventricular zone and dentate gyrus (at protein level).

The protein resides in the nucleus. It localises to the cytoplasm. Its subcellular location is the chromosome. The enzyme catalyses L-arginyl-[protein] + 2 S-adenosyl-L-methionine = N(omega),N(omega)-dimethyl-L-arginyl-[protein] + 2 S-adenosyl-L-homocysteine + 2 H(+). With respect to regulation, methylation of H3R17 (H3R17me) by CARM1 is stimulated by preacetylation of H3 'Lys-18' (H3K18ac) H3 'Lys-23' (H3K23ac) by EP300 and blocked by citrullination of H3 'Arg-17' (H3R17ci) by PADI4. Methylates (mono- and asymmetric dimethylation) the guanidino nitrogens of arginyl residues in several proteins involved in DNA packaging, transcription regulation, pre-mRNA splicing, and mRNA stability. Recruited to promoters upon gene activation together with histone acetyltransferases from EP300/P300 and p160 families, methylates histone H3 at 'Arg-17' (H3R17me), forming mainly asymmetric dimethylarginine (H3R17me2a), leading to activation of transcription via chromatin remodeling. During nuclear hormone receptor activation and TCF7L2/TCF4 activation, acts synergically with EP300/P300 and either one of the p160 histone acetyltransferases NCOA1/SRC1, NCOA2/GRIP1 and NCOA3/ACTR or CTNNB1/beta-catenin to activate transcription. During myogenic transcriptional activation, acts together with NCOA3/ACTR as a coactivator for MEF2C. During monocyte inflammatory stimulation, acts together with EP300/P300 as a coactivator for NF-kappa-B. Acts as a coactivator for PPARG, promotes adipocyte differentiation and the accumulation of brown fat tissue. Plays a role in the regulation of pre-mRNA alternative splicing by methylation of splicing factors. Also seems to be involved in p53/TP53 transcriptional activation. Methylates EP300/P300, both at 'Arg-2142', which may loosen its interaction with NCOA2/GRIP1, and at 'Arg-580' and 'Arg-604' in the KIX domain, which impairs its interaction with CREB and inhibits CREB-dependent transcriptional activation. Also methylates arginine residues in RNA-binding proteins PABPC1, ELAVL1 and ELAV4, which may affect their mRNA-stabilizing properties and the half-life of their target mRNAs. Acts as a transcriptional coactivator of ACACA/acetyl-CoA carboxylase by enriching H3R17 methylation at its promoter, thereby positively regulating fatty acid synthesis. Independently of its methyltransferase activity, involved in replication fork progression: promotes PARP1 recruitment to replication forks, leading to poly-ADP-ribosylation of chromatin at replication forks and reduced fork speed. The chain is Histone-arginine methyltransferase CARM1 (Carm1) from Mus musculus (Mouse).